Consider the following 471-residue polypeptide: Abscission/NoCut checkpoint regulator (471 aa).

Positions 39–64 (GGAGQGREGRSWGEGPRGPGLGRRDL) are disordered. An FYVE-type zinc finger spans residues 74 to 133 (ATMESRCYGCAVKFTLFKKEYGCKNCGRAFCSGCLSFSAAVPRTGNTQQKVCKQCHEVLT). The Zn(2+) site is built by Cys-80, Cys-83, Cys-96, Cys-99, Cys-104, Cys-107, Cys-125, and Cys-128. Ser-144 is modified (phosphoserine). Residues 174 to 187 (DQMIAERLARLRQE) carry the MIM1-A motif. A Glycyl lysine isopeptide (Lys-Gly) (interchain with G-Cter in SUMO2) cross-link involves residue Lys-207. Position 243 is a phosphothreonine (Thr-243). The segment at 271 to 299 (KGGGPAASLQNDLNQGGPGSTNSKRQANW) is disordered. Residues 278-299 (SLQNDLNQGGPGSTNSKRQANW) show a composition bias toward polar residues. Gly-286 and Ser-293 each carry phosphoserine. Positions 311–375 (EAALELREEN…RVLQQLTEEA (65 aa)) form a coiled coil. The MIM1-B motif lies at 326-339 (ILALAKRLAMLRGQ). A Phosphoserine modification is found at Ser-354. The segment at 386-412 (PAEQASRPWTQPRGAEPEAQDVDPRPE) is disordered. A Phosphoserine modification is found at Ser-463.

As to quaternary structure, interacts (via MIM1-B) with VPS4A; interaction takes place at the midbody ring following cytokinesis checkpoint activation. Post-translationally, phosphorylated in vitro at Ser-22 by AURKB; however, phosphorylation at this site could not be confirmed in vivo. As to expression, detected in brain, heart, skeletal muscle and kidney. Expressed in the liver (at protein level).

It localises to the cytoplasm. It is found in the cytoskeleton. The protein resides in the microtubule organizing center. Its subcellular location is the centrosome. The protein localises to the cleavage furrow. It localises to the midbody. It is found in the midbody ring. Its function is as follows. Key regulator of abscission step in cytokinesis: part of the cytokinesis checkpoint, a process required to delay abscission to prevent both premature resolution of intercellular chromosome bridges and accumulation of DNA damage. Together with CHMP4C, required to retain abscission-competent VPS4 (VPS4A and/or VPS4B) at the midbody ring until abscission checkpoint signaling is terminated at late cytokinesis. Deactivation of AURKB results in dephosphorylation of CHMP4C followed by its dissociation from ZFYVE19/ANCHR and VPS4 and subsequent abscission. In Homo sapiens (Human), this protein is Abscission/NoCut checkpoint regulator (ZFYVE19).